The sequence spans 1126 residues: NUT family member 1 (1126 aa).

Disordered regions lie at residues 1–56 (MASD…PVFS), 334–367 (IPKK…IPPE), 475–515 (EDAQ…QGAA), 537–559 (QEQT…SPSS), 664–692 (AGML…DDRG), 755–810 (ALNS…GPGL), and 932–1014 (GEGR…EELS). Over residues 30–55 (FAPPPPVPPDQPLWEPSPQPPIPPVF) the composition is skewed to pro residues. The segment covering 338-353 (AASKTRAPRRRQRKPQ) has biased composition (basic residues). The span at 962–975 (KLTNGQGQGSTSPR) shows a compositional bias: polar residues. S973 carries the post-translational modification Phosphoserine. Basic and acidic residues predominate over residues 987–1005 (TPIKEKCTSADRAKRRETE). Residues S1022, S1025, and S1027 each carry the phosphoserine modification. A disordered region spans residues 1032 to 1126 (PLSTRQASGG…SKRKKRRRSQ (95 aa)). Q1042 is subject to N5-methylglutamine. Basic residues predominate over residues 1106–1126 (PRKRRRDGFVTSKRKKRRRSQ).

This sequence belongs to the NUT family. Post-translationally, methylated at Gln-1042 by N6AMT1. In terms of processing, phosphorylation on Ser-1022, Ser-1025 or Ser-1027 is important for cytoplasmic export.

The protein resides in the cytoplasm. It localises to the nucleus. Functionally, plays a role in the regulation of proliferation. Regulates TERT expression by modulating SP1 binding to TERT promoter binding sites. The polypeptide is NUT family member 1 (Mus musculus (Mouse)).